A 98-amino-acid polypeptide reads, in one-letter code: MVKKAHSFRRKTRGKLSKHPRRRGLPPLTRFLQEFEVGQKVHIVIEPSYHRGMPDPRFHGRTGTVVGKRGDAYIVEIKDGGKVKTFFIHPVHLRPQKG.

Basic residues predominate over residues 1 to 24 (MVKKAHSFRRKTRGKLSKHPRRRG). A disordered region spans residues 1 to 27 (MVKKAHSFRRKTRGKLSKHPRRRGLPP).

It belongs to the eukaryotic ribosomal protein eL21 family.

In Thermococcus gammatolerans (strain DSM 15229 / JCM 11827 / EJ3), this protein is Large ribosomal subunit protein eL21.